The following is a 94-amino-acid chain: MSESNVTETNEQRGFRKTREGLVVSDKMDKTVVVAVEDRVKHALYGKVIRRTNKLKAHDEQNAAGVGDRVLLMETRPLSATKRWRVVEILEKAK.

It belongs to the universal ribosomal protein uS17 family. In terms of assembly, part of the 30S ribosomal subunit.

In terms of biological role, one of the primary rRNA binding proteins, it binds specifically to the 5'-end of 16S ribosomal RNA. In Streptomyces avermitilis (strain ATCC 31267 / DSM 46492 / JCM 5070 / NBRC 14893 / NCIMB 12804 / NRRL 8165 / MA-4680), this protein is Small ribosomal subunit protein uS17.